The chain runs to 253 residues: 1-(5-phosphoribosyl)-5-[(5-phosphoribosylamino)methylideneamino] imidazole-4-carboxamide isomerase (253 aa).

Aspartate 8 serves as the catalytic Proton acceptor. The active-site Proton donor is the aspartate 129.

This sequence belongs to the HisA/HisF family.

Its subcellular location is the cytoplasm. The enzyme catalyses 1-(5-phospho-beta-D-ribosyl)-5-[(5-phospho-beta-D-ribosylamino)methylideneamino]imidazole-4-carboxamide = 5-[(5-phospho-1-deoxy-D-ribulos-1-ylimino)methylamino]-1-(5-phospho-beta-D-ribosyl)imidazole-4-carboxamide. The protein operates within amino-acid biosynthesis; L-histidine biosynthesis; L-histidine from 5-phospho-alpha-D-ribose 1-diphosphate: step 4/9. This is 1-(5-phosphoribosyl)-5-[(5-phosphoribosylamino)methylideneamino] imidazole-4-carboxamide isomerase from Microcystis aeruginosa (strain NIES-843 / IAM M-2473).